The primary structure comprises 637 residues: MNTGIIDLFDNHVDSIPTILPHQLATLDYLVRTIIDENRSVLLFHIMGSGKTIIALLFALVASRFKKVYILVPNINILKIFNYNMGVAMNLFNDEFIAENIFIHSTTSFYSLNYNDNVINYNGLSRYNNSIFIVDEAHNIFGNNTGELMTVIKNKNKIPFLLLSGSPITNTPNTLGHIIDLMSEETIDFGEIISRGKKVIQTLLNERGVNVLKDLLKGRISYYEMPDKDLPTIRYHGRKFLDTRVVYCHMSKLQERDYMITRRQLCYHEMFDKNMYNVSMAVLGQLNLMNNLDTLFQEQDKELYPNLKINNGVLYGEELVTLNISSKFKYFINRIQTLNGKHFIYFSNSTYGGLVIKYIMLSNGYSEYNGSQGTNPHMINGKPKTFAIVTSKMKSSLEDLLDVYNSPENDDGSQLMFLFSSNIMSESYTLKEVRHIWFMTIPDTFSQYNQILGRSIRKFSYADISEPVNVYLLAAVYSDFNDEVTSLNDYTQDELINVLPFDIKKLLYLKFKTKETNRIYSILQEMSETYSLPPHPSIVKVLLGELVRQFFYNNSRIKYNDTKLLKMVTSVIKNKEDARNYIDDIVNGHFFVSNKVFDKSLLYKYENDIITVPFRLSYEPFVWGVNFRKEYNVVSSP.

Positions 32 to 185 (RTIIDENRSV…GHIIDLMSEE (154 aa)) constitute a Helicase ATP-binding domain. 45–52 (HIMGSGKT) lines the ATP pocket. The DEXH box signature appears at 135 to 138 (DEAH). Residues 327–507 (KFKYFINRIQ…VLPFDIKKLL (181 aa)) enclose the Helicase C-terminal domain.

This sequence belongs to the helicase family. VETF subfamily. Heterodimer of a 70 kDa and a 82 kDa subunit. Part of the early transcription complex composed of ETF, RAP94/OPG109, and the DNA-directed RNA polymerase.

The protein resides in the virion. Functionally, acts with RNA polymerase to initiate transcription from early gene promoters. Is recruited by the RPO-associated protein of 94 kDa RAP94/OPG109 to form the early transcription complex, which also contains the core RNA polymerase. ETF heterodimer binds to early gene promoters. The sequence is that of Early transcription factor 70 kDa subunit (OPG118) from Vaccinia virus (strain Ankara) (VACV).